Here is a 525-residue protein sequence, read N- to C-terminus: Protein-serine O-palmitoleoyltransferase porcupine (525 aa).

A run of 9 helical transmembrane segments spans residues 83–103 (VMQYVAPMLLLCLLCRLLCLL), 125–145 (LIILQITVGYRLLLLLLLAAV), 159–179 (GAQVLAVLTVGSQFLYELLIW), 220–240 (FAYLGYIYSPATCALGPWVSF), 260–280 (LLPNVVICVLAVTVSNCVAPA), 301–318 (VRSSHYFVGMMAQALLVA), 395–415 (SLLHGMDLRIYLVLISLAFLA), 467–487 (NLAFTALAIFHLAYLGVVLLG), and 505–525 (QAGYLSHYIGLGTFVLYLFIS). Histidine 398 is an active-site residue.

Belongs to the membrane-bound acyltransferase family. Porcupine subfamily. In terms of assembly, interacts with wg and Wnt5.

The protein resides in the endoplasmic reticulum membrane. The catalysed reaction is [Wnt protein]-L-serine + (9Z)-hexadecenoyl-CoA = [Wnt protein]-O-(9Z)-hexadecenoyl-L-serine + CoA. Protein-serine O-palmitoleoyltransferase that acts as a key regulator of the Wnt signaling pathway by mediating the attachment of palmitoleate, a 16-carbon monounsaturated fatty acid (C16:1(9Z)), to Wnt proteins. Serine palmitoleoylation of Wnt proteins is required for efficient binding to frizzled receptors. Also facilitates the glycosylation of Wnt family members, including wg and Wnt5. The cotranslational disulfide bond formation of wg competes with the N-glycosylation. Porc stimulates the post-translational N-glycosylation by anchoring wg at the ER membrane, probably through acylation. The protein is Protein-serine O-palmitoleoyltransferase porcupine of Drosophila melanogaster (Fruit fly).